The following is a 430-amino-acid chain: ATP-dependent protease ATPase subunit HslU (430 aa).

ATP-binding positions include Val-18, 60-65 (GVGKTE), Asp-243, Glu-308, and Arg-380.

Belongs to the ClpX chaperone family. HslU subfamily. In terms of assembly, a double ring-shaped homohexamer of HslV is capped on each side by a ring-shaped HslU homohexamer. The assembly of the HslU/HslV complex is dependent on binding of ATP.

Its subcellular location is the cytoplasm. Functionally, ATPase subunit of a proteasome-like degradation complex; this subunit has chaperone activity. The binding of ATP and its subsequent hydrolysis by HslU are essential for unfolding of protein substrates subsequently hydrolyzed by HslV. HslU recognizes the N-terminal part of its protein substrates and unfolds these before they are guided to HslV for hydrolysis. This chain is ATP-dependent protease ATPase subunit HslU, found in Caulobacter vibrioides (strain ATCC 19089 / CIP 103742 / CB 15) (Caulobacter crescentus).